Consider the following 238-residue polypeptide: Endonuclease V (238 aa).

Residues D46 and D116 each contribute to the Mg(2+) site.

It belongs to the endonuclease V family. The cofactor is Mg(2+).

Its subcellular location is the cytoplasm. It catalyses the reaction Endonucleolytic cleavage at apurinic or apyrimidinic sites to products with a 5'-phosphate.. Its function is as follows. DNA repair enzyme involved in the repair of deaminated bases. Selectively cleaves double-stranded DNA at the second phosphodiester bond 3' to a deoxyinosine leaving behind the intact lesion on the nicked DNA. The polypeptide is Endonuclease V (Bacillus subtilis (strain 168)).